The sequence spans 432 residues: Adenylosuccinate synthetase (432 aa).

GTP is bound by residues 13 to 19 (GDEGKGK) and 41 to 43 (GHT). Catalysis depends on aspartate 14, which acts as the Proton acceptor. Residues aspartate 14 and glycine 41 each coordinate Mg(2+). Residues 14–17 (DEGK), 39–42 (NAGH), threonine 130, arginine 144, glutamine 225, threonine 240, and arginine 304 contribute to the IMP site. The active-site Proton donor is histidine 42. 300-306 (ATTGRRR) contributes to the substrate binding site. Residues arginine 306, 332–334 (KLD), and 415–417 (STG) contribute to the GTP site.

Belongs to the adenylosuccinate synthetase family. In terms of assembly, homodimer. Requires Mg(2+) as cofactor.

The protein resides in the cytoplasm. The enzyme catalyses IMP + L-aspartate + GTP = N(6)-(1,2-dicarboxyethyl)-AMP + GDP + phosphate + 2 H(+). It functions in the pathway purine metabolism; AMP biosynthesis via de novo pathway; AMP from IMP: step 1/2. In terms of biological role, plays an important role in the de novo pathway of purine nucleotide biosynthesis. Catalyzes the first committed step in the biosynthesis of AMP from IMP. The sequence is that of Adenylosuccinate synthetase from Salmonella arizonae (strain ATCC BAA-731 / CDC346-86 / RSK2980).